We begin with the raw amino-acid sequence, 305 residues long: Oxygen-dependent coproporphyrinogen-III oxidase (305 aa).

Residue Ser-99 participates in substrate binding. A divalent metal cation-binding residues include His-103 and His-113. Catalysis depends on His-113, which acts as the Proton donor. Residue 115–117 coordinates substrate; it reads NVR. Positions 152 and 182 each coordinate a divalent metal cation. Positions 247-282 are important for dimerization; sequence YVEFNLVLDRGTLFGLQTGGRTESILMSMPPLARWE. Position 265–267 (265–267) interacts with substrate; that stretch reads GGR.

This sequence belongs to the aerobic coproporphyrinogen-III oxidase family. In terms of assembly, homodimer. It depends on a divalent metal cation as a cofactor.

The protein resides in the cytoplasm. The catalysed reaction is coproporphyrinogen III + O2 + 2 H(+) = protoporphyrinogen IX + 2 CO2 + 2 H2O. The protein operates within porphyrin-containing compound metabolism; protoporphyrin-IX biosynthesis; protoporphyrinogen-IX from coproporphyrinogen-III (O2 route): step 1/1. Its function is as follows. Involved in the heme biosynthesis. Catalyzes the aerobic oxidative decarboxylation of propionate groups of rings A and B of coproporphyrinogen-III to yield the vinyl groups in protoporphyrinogen-IX. This chain is Oxygen-dependent coproporphyrinogen-III oxidase, found in Vibrio cholerae serotype O1 (strain M66-2).